The following is a 146-amino-acid chain: Mitochondrial DnaJ homolog 2 (146 aa).

The 62-residue stretch at 85–146 folds into the J domain; it reads EALLILDISA…LERSVLLRKR (62 aa).

In terms of assembly, interacts with PAM16/TIM16 and is recruited by the PAM complex.

It is found in the mitochondrion inner membrane. Functionally, plays a role in mitochondrial biogenesis and protein folding. Participates in the translocation of transit peptide-containing proteins from the inner membrane into the mitochondrial matrix in an ATP-dependent manner, probably by stimulating activity of mtHSP70 (SSC1). The protein is Mitochondrial DnaJ homolog 2 (MDJ2) of Saccharomyces cerevisiae (strain ATCC 204508 / S288c) (Baker's yeast).